The following is a 230-amino-acid chain: Thioredoxin domain-containing protein PLP3A (230 aa).

Residues 89 to 173 (VSEGDFLGEV…GVAMDRLVGF (85 aa)) form the Thioredoxin domain. Positions 197–230 (LSKKKKEEDDEDAEYQESIRRSVRSSENLDSDSD) are disordered.

It belongs to the phosducin family. Interacts with TUBB2, TUBB3, TUBB4 and TUBB5. As to expression, expressed in embryos, shoot meristems, leaf primordia, root meristems, floral meristems and young floral buds.

It is found in the cytoplasm. It localises to the nucleus. Its function is as follows. Tubulin-binding protein involved in microtubule formation. This chain is Thioredoxin domain-containing protein PLP3A (PLP3A), found in Arabidopsis thaliana (Mouse-ear cress).